The primary structure comprises 285 residues: Undecaprenyl-diphosphatase (285 aa).

Transmembrane regions (helical) follow at residues 3 to 23 (ILLLVKAAIMGIVEGLTEFLP), 41 to 61 (GEIVKVFDIAIQTGAMFAVIW), 87 to 107 (LLIAFVPAVISGLALGGLIKE), 109 to 129 (LFHPVPVATAFVVGGLIILWV), 197 to 217 (TEFSFFLGIPTLMGAGAYSLI), 226 to 246 (GDLPVFAVGVVFAFLSALVCI), and 260 to 280 (VFAWYRIAFGGLVLLSAWGGW).

This sequence belongs to the UppP family.

Its subcellular location is the cell inner membrane. The enzyme catalyses di-trans,octa-cis-undecaprenyl diphosphate + H2O = di-trans,octa-cis-undecaprenyl phosphate + phosphate + H(+). Its function is as follows. Catalyzes the dephosphorylation of undecaprenyl diphosphate (UPP). Confers resistance to bacitracin. This chain is Undecaprenyl-diphosphatase, found in Methylibium petroleiphilum (strain ATCC BAA-1232 / LMG 22953 / PM1).